Reading from the N-terminus, the 505-residue chain is Neuronal acetylcholine receptor subunit alpha-3 (505 aa).

The N-terminal stretch at 1-31 is a signal peptide; it reads MGSGPLSLPLALSPPRLLLLLLLSLLPVARA. The Extracellular portion of the chain corresponds to 32 to 250; that stretch reads SEAEHRLFER…PLFYTINLII (219 aa). 2 N-linked (GlcNAc...) asparagine glycosylation sites follow: asparagine 55 and asparagine 172. Disulfide bonds link cysteine 159-cysteine 173 and cysteine 223-cysteine 224. Residues 251-266 traverse the membrane as a helical segment; it reads PCLLISFLTVLVFYLP. Residues 267–268 are Cytoplasmic-facing; that stretch reads SD. The helical transmembrane segment at 269 to 285 threads the bilayer; the sequence is CGEKVTLCISVLLSLTV. At 286–307 the chain is on the extracellular side; the sequence is FLLVITETIPSTSLVIPLIGEY. The helical transmembrane segment at 308 to 326 threads the bilayer; that stretch reads LLFTMIFVTLSIVITVFVL. Residues 327–474 lie on the Cytoplasmic side of the membrane; the sequence is NVHYRTPTTH…QDDWKYVAMV (148 aa). A phosphoserine mark is found at serine 413 and serine 416. The helical transmembrane segment at 475 to 493 threads the bilayer; the sequence is IDRIFLWVFTLVCILGTAG. The Extracellular portion of the chain corresponds to 494-505; the sequence is LFLQPLMAREDA.

Belongs to the ligand-gated ion channel (TC 1.A.9) family. Acetylcholine receptor (TC 1.A.9.1) subfamily. Alpha-3/CHRNA3 sub-subfamily. In terms of assembly, neuronal AChR is composed of two different types of subunits: alpha and beta. CHRNA3/Alpha-3 subunit can be combined to CHRNA5/alpha-5, CHRNB2/beta-2 CHRNB3/beta-3 or CHRNB4/beta-4 to give rise to functional receptors. Forms stoichiometries such as (CHRNA3)2:(CHRNB4)3 or (CHRNA3:CHRNB4)2:CHRNB3. Part of a complex composed of STUB1/CHIP, VCP/p97, CHRNA3, and UBXN2A that modulates the ubiquitination and endoplasmic reticulum-associated degradation (ERAD) of CHRNA3. Within the complex UBXN2A acts as a scaffold protein required for the interaction of CHRNA3 with VCP/p97, this interaction also inhibits CHRNA3 ubiquitination by STUB1/CHIP and subsequently ERAD. Interacts with UBXN2A (via SEP domain), the interaction is required for the interaction of CHRNA3 in the STUB1:VCP:UBXN2A complex. Interacts with RIC3; which is required for proper folding and assembly. Interacts with LYPD6. Post-translationally, ubiquitinated; by STUB1/CHIP and thereafter degraded by the 26S proteosome complex.

Its subcellular location is the synaptic cell membrane. It localises to the cell membrane. The protein resides in the endoplasmic reticulum. It is found in the golgi apparatus. It carries out the reaction Ca(2+)(in) = Ca(2+)(out). It catalyses the reaction K(+)(in) = K(+)(out). The catalysed reaction is Na(+)(in) = Na(+)(out). Its activity is regulated as follows. Activated by a myriad of ligands such as acetylcholine, cytisine, nicotine, choline and epibatidine. The heteropentamer CHRNA3:CHRNB2 activity is blocked by alpha-conotoxins ImI, ImII, PnIA, GID and MII. The heteropentamer CHRNA3:CHRNB4 activity is blocked by the alpha-conotoxin ImI and AuIB. In terms of biological role, component of neuronal acetylcholine receptors (nAChRs) that function as pentameric, ligand-gated cation channels with high calcium permeability among other activities. nAChRs are excitatory neurotrasnmitter receptors formed by a collection of nAChR subunits known to mediate synaptic transmission in the nervous system and the neuromuscular junction. Each nAchR subunit confers differential attributes to channel properties, including activation, deactivation and desensitization kinetics, pH sensitivity, cation permeability, and binding to allosteric modulators. CHRNA3 forms heteropentameric neuronal acetylcholine receptors with CHRNB2 and CHRNB4, with CHRNA5, and CHRNB3 as accesory subunits. CHRNA3:CHRNB4 being predominant in neurons of the autonomic ganglia, it is known as ganglionic nicotinic receptor. CHRNA3:CHRNB4 or CHRNA3:CHRNA5:CHRNB4 play also an important role in the habenulo-interpeduncular tract, modulating the mesolimbic dopamine system and affecting reward circuits and addiction. Hypothalamic CHRNA3:CHRNB4 nAChR activation by nicotine leads to activation of POMC neurons and a decrease in food intake. Also expressed in the urothelium where it modulates reflex bladder activity by increasing intracellular calcium through extracellular influx and basal ATP release. This is Neuronal acetylcholine receptor subunit alpha-3 from Homo sapiens (Human).